The chain runs to 392 residues: Speckle-type POZ protein-like (392 aa).

Residues 31-161 (KFSYMWTINN…DDKLTLFCEV (131 aa)) enclose the MATH domain. The 68-residue stretch at 200–267 (TDCCFFVRGK…VYTGKAPNLD (68 aa)) folds into the BTB domain.

It belongs to the Tdpoz family. As to quaternary structure, homodimer. Heterodimer with SPOP. Component of cullin-RING-based BCR (BTB-CUL3-RBX1) E3 ubiquitin-protein ligase complexes containing homodimeric SPOPL or the heterodimer formed by SPOP and SPOPL. Interacts with CUL3 and MACROH2A1.

It localises to the nucleus. It participates in protein modification; protein ubiquitination. Its function is as follows. Component of a cullin-RING-based BCR (BTB-CUL3-RBX1) E3 ubiquitin-protein ligase complex that mediates the ubiquitination and subsequent proteasomal degradation of target proteins, but with relatively low efficiency. Cullin-RING-based BCR (BTB-CUL3-RBX1) E3 ubiquitin-protein ligase complexes containing homodimeric SPOPL or the heterodimer formed by SPOP and SPOPL are less efficient than ubiquitin ligase complexes containing only SPOP. May function to down-regulate the activity of cullin-RING-based BCR (BTB-CUL3-RBX1) E3 ubiquitin-protein ligase complexes that contain SPOP. In Mus musculus (Mouse), this protein is Speckle-type POZ protein-like (Spopl).